The primary structure comprises 455 residues: ATP-dependent protease ATPase subunit HslU (455 aa).

ATP-binding positions include Val-23, 65–70, Asp-266, Glu-333, and Arg-405; that span reads GVGKTE.

It belongs to the ClpX chaperone family. HslU subfamily. In terms of assembly, a double ring-shaped homohexamer of HslV is capped on each side by a ring-shaped HslU homohexamer. The assembly of the HslU/HslV complex is dependent on binding of ATP.

It is found in the cytoplasm. Functionally, ATPase subunit of a proteasome-like degradation complex; this subunit has chaperone activity. The binding of ATP and its subsequent hydrolysis by HslU are essential for unfolding of protein substrates subsequently hydrolyzed by HslV. HslU recognizes the N-terminal part of its protein substrates and unfolds these before they are guided to HslV for hydrolysis. The chain is ATP-dependent protease ATPase subunit HslU from Xanthomonas campestris pv. campestris (strain 8004).